Consider the following 309-residue polypeptide: Olfactory receptor 1A1 (309 aa).

The Extracellular segment spans residues 1 to 25 (MRENNQSSTLEFILLGVTGQQEQED). N-linked (GlcNAc...) asparagine glycosylation is present at asparagine 5. The helical transmembrane segment at 26 to 49 (FFYILFLFIYPITLIGNLLIVLAI) threads the bilayer. Over 50–57 (CSDVRLHN) the chain is Cytoplasmic. Residues 58–79 (PMYFLLANLSLVDIFFSSVTIP) form a helical membrane-spanning segment. The Extracellular segment spans residues 80-100 (KMLANHLLGSKSISFGGCLTQ). Cysteine 97 and cysteine 189 form a disulfide bridge. A helical transmembrane segment spans residues 101 to 120 (MYFMIALGNTDSYILAAMAY). Topologically, residues 121–139 (DRAVAISRPLHYTTIMSPR) are cytoplasmic. Residues 140–158 (SCIWLIAGSWVIGNANALP) form a helical membrane-spanning segment. At 159-195 (HTLLTASLSFCGNQEVANFYCDITPLLKLSCSDIHFH) the chain is on the extracellular side. A helical membrane pass occupies residues 196 to 218 (VKMMYLGVGIFSVPLLCIIVSYI). Topologically, residues 219–235 (RVFSTVFQVPSTKGVLK) are cytoplasmic. Residues 236-258 (AFSTCGSHLTVVSLYYGTVMGTY) traverse the membrane as a helical segment. The Extracellular portion of the chain corresponds to 259–270 (FRPLTNYSLKDA). N-linked (GlcNAc...) asparagine glycosylation is present at asparagine 264. Residues 271–290 (VITVMYTAVTPMLNPFIYSL) traverse the membrane as a helical segment. The Cytoplasmic portion of the chain corresponds to 291 to 309 (RNRDMKAALRKLFNKRISS).

It belongs to the G-protein coupled receptor 1 family.

It is found in the cell membrane. Odorant receptor. The sequence is that of Olfactory receptor 1A1 (OR1A1) from Homo sapiens (Human).